A 273-amino-acid chain; its full sequence is Dermonecrotic toxin LdSicTox-alphaIB1bii (273 aa).

Residue H5 is part of the active site. Mg(2+) is bound by residues E25 and D27. Catalysis depends on H41, which acts as the Nucleophile. Cystine bridges form between C45–C51 and C47–C190. D85 is a binding site for Mg(2+). N250 carries N-linked (GlcNAc...) asparagine glycosylation.

Belongs to the arthropod phospholipase D family. Class II subfamily. It depends on Mg(2+) as a cofactor. As to expression, expressed by the venom gland.

It localises to the secreted. It carries out the reaction an N-(acyl)-sphingosylphosphocholine = an N-(acyl)-sphingosyl-1,3-cyclic phosphate + choline. It catalyses the reaction an N-(acyl)-sphingosylphosphoethanolamine = an N-(acyl)-sphingosyl-1,3-cyclic phosphate + ethanolamine. The enzyme catalyses a 1-acyl-sn-glycero-3-phosphocholine = a 1-acyl-sn-glycero-2,3-cyclic phosphate + choline. The catalysed reaction is a 1-acyl-sn-glycero-3-phosphoethanolamine = a 1-acyl-sn-glycero-2,3-cyclic phosphate + ethanolamine. Functionally, dermonecrotic toxins cleave the phosphodiester linkage between the phosphate and headgroup of certain phospholipids (sphingolipid and lysolipid substrates), forming an alcohol (often choline) and a cyclic phosphate. This toxin acts on sphingomyelin (SM). It may also act on ceramide phosphoethanolamine (CPE), lysophosphatidylcholine (LPC) and lysophosphatidylethanolamine (LPE), but not on lysophosphatidylserine (LPS), and lysophosphatidylglycerol (LPG). It acts by transphosphatidylation, releasing exclusively cyclic phosphate products as second products. Induces dermonecrosis, hemolysis, increased vascular permeability, edema, inflammatory response, and platelet aggregation. The sequence is that of Dermonecrotic toxin LdSicTox-alphaIB1bii from Loxosceles deserta (Desert recluse spider).